A 1035-amino-acid chain; its full sequence is NHS-like protein 3 (1035 aa).

Residue Val2 is the site of N-myristoyl glycine attachment. Disordered regions lie at residues 23–44 (KAEN…AVDE), 76–105 (QEKQ…DEDN), and 133–162 (IQRK…RRST). Residues 76 to 90 (QEKQKLNKGGWDHGD) are compositionally biased toward basic and acidic residues. 4 positions are modified to phosphoserine: Ser93, Ser138, Ser145, and Ser161. Thr162 carries the phosphothreonine modification. A Phosphoserine modification is found at Ser215. Arg320 carries the asymmetric dimethylarginine modification. A phosphoserine mark is found at Ser322, Ser327, Ser330, Ser338, Ser339, Ser341, and Ser342. Disordered regions lie at residues 332–869 (RSLG…APSS) and 885–1035 (SEGL…KELA). The span at 338–365 (SSVSSPQPRSRHPSSSSDTWSHSQSSDT) shows a compositional bias: low complexity. A compositionally biased stretch (polar residues) spans 366 to 388 (IVSDGSTLSSKGGSEGQPESSTA). A phosphoserine mark is found at Ser400, Ser404, and Ser409. The segment covering 411–429 (AEASDTLSIRSSGQLSGRS) has biased composition (polar residues). Residues 431–449 (SLRKLKRPPPPPRRTHSLH) are compositionally biased toward basic residues. Low complexity predominate over residues 517 to 532 (RTLSPSSGYSSQSGTP). Thr531 is subject to Phosphothreonine. Residues 543–552 (PASPGKAQPP) are compositionally biased toward pro residues. Ser545 is modified (phosphoserine). The segment covering 562-589 (SPGASVSSSLTSLCSSSSDPAPSDRSGP) has biased composition (low complexity). Phosphothreonine is present on Thr593. Residues 602–624 (PPHPKVPAPFSPPPSKPRSPNPA) show a composition bias toward pro residues. Ser612 carries the phosphoserine modification. Low complexity-rich tracts occupy residues 625 to 645 (APAL…DASP) and 652 to 662 (QTTLTPLQESP). Phosphoserine occurs at positions 669 and 673. Composition is skewed to pro residues over residues 669–685 (SPPP…PPPT) and 709–718 (NWPPPPPPAP). Residues 737-765 (SVASPEPAGPSGSPELVSSPAASSSSATA) are compositionally biased toward low complexity. Residues 771–784 (PGSPDPPPAPPAPA) are compositionally biased toward pro residues. The span at 838 to 848 (GAPTPALGPSA) shows a compositional bias: low complexity. 3 positions are modified to phosphoserine: Ser858, Ser862, and Ser868. The segment covering 894 to 906 (NGPPEAEPRPPQS) has biased composition (pro residues). Residues Ser929, Ser959, Ser971, and Ser979 each carry the phosphoserine modification. Over residues 961-980 (KAPPPVARKPSVGVPPPASP) the composition is skewed to pro residues. Basic and acidic residues predominate over residues 999–1008 (TQDRTKRELA).

Expressed in lung.

Its function is as follows. Able to directly activate the TNF-NFkappaB signaling pathway. In Homo sapiens (Human), this protein is NHS-like protein 3.